A 291-amino-acid chain; its full sequence is m-AAA protease-interacting protein 1, mitochondrial (291 aa).

The transit peptide at 1–96 directs the protein to the mitochondrion; the sequence is MALAVRLLPR…TFPSCPRRTY (96 aa).

In terms of assembly, interacts with AFG3L2. Interacts with SPG7. Interacts with SMDT1/EMRE (via the N-terminal transit peptide); interaction is direct and takes place before maturation of SMDT1/EMRE.

It is found in the mitochondrion matrix. Functionally, promotes sorting of SMDT1/EMRE in mitochondria by ensuring its maturation. Interacts with the transit peptide region of SMDT1/EMRE precursor protein in the mitochondrial matrix, leading to protect it against protein degradation by YME1L1, thereby ensuring SMDT1/EMRE maturation by the mitochondrial processing peptidase (PMPCA and PMPCB). The polypeptide is m-AAA protease-interacting protein 1, mitochondrial (Bos taurus (Bovine)).